Here is a 595-residue protein sequence, read N- to C-terminus: Aspartate--tRNA(Asp/Asn) ligase (595 aa).

Glu-178 serves as a coordination point for L-aspartate. Residues 202 to 205 are aspartate; that stretch reads QLFK. Arg-224 is an L-aspartate binding site. Residues 224–226 and Gln-233 each bind ATP; that span reads RDE. His-458 serves as a coordination point for L-aspartate. Glu-488 serves as a coordination point for ATP. Arg-495 contributes to the L-aspartate binding site. 540–543 contacts ATP; sequence GLDR.

This sequence belongs to the class-II aminoacyl-tRNA synthetase family. Type 1 subfamily. Homodimer.

The protein resides in the cytoplasm. The enzyme catalyses tRNA(Asx) + L-aspartate + ATP = L-aspartyl-tRNA(Asx) + AMP + diphosphate. In terms of biological role, aspartyl-tRNA synthetase with relaxed tRNA specificity since it is able to aspartylate not only its cognate tRNA(Asp) but also tRNA(Asn). Reaction proceeds in two steps: L-aspartate is first activated by ATP to form Asp-AMP and then transferred to the acceptor end of tRNA(Asp/Asn). The chain is Aspartate--tRNA(Asp/Asn) ligase from Trichodesmium erythraeum (strain IMS101).